A 137-amino-acid polypeptide reads, in one-letter code: Acidic phospholipase A2 PL-I (137 aa).

A signal peptide spans 1–17; sequence AVCVSLLGASSIRPLPL. Disulfide bonds link Cys-28–Cys-89, Cys-44–Cys-136, Cys-46–Cys-62, Cys-61–Cys-117, Cys-68–Cys-110, Cys-78–Cys-103, and Cys-96–Cys-108. Ca(2+) is bound by residues Tyr-45, Gly-47, and Gly-49. His-65 is a catalytic residue. Asp-66 contributes to the Ca(2+) binding site. Asp-111 is an active-site residue.

It depends on Ca(2+) as a cofactor. As to expression, expressed by the venom gland.

The protein resides in the secreted. It catalyses the reaction a 1,2-diacyl-sn-glycero-3-phosphocholine + H2O = a 1-acyl-sn-glycero-3-phosphocholine + a fatty acid + H(+). Functionally, snake venom phospholipase A2 (PLA2) that may act in the hemostasis system of the prey. Exhibits hydrolytic activities, and prefers the anionic micelles (dPPC with deoxycholate) (793 umol/mg/min) to the zwitterionic micelles (dPPC with Triton X-100) (591 umol/mg/min). PLA2 catalyzes the calcium-dependent hydrolysis of the 2-acyl groups in 3-sn-phosphoglycerides. The polypeptide is Acidic phospholipase A2 PL-I (Walterinnesia aegyptia (Desert black snake)).